A 112-amino-acid chain; its full sequence is Outer membrane protein assembly factor BamE (112 aa).

Residues 1–19 (MRCKTLTAAAAVLLMLTAG) form the signal peptide. A lipid anchor (N-palmitoyl cysteine) is attached at Cys20. Cys20 carries the S-diacylglycerol cysteine lipid modification.

It belongs to the BamE family. In terms of assembly, part of the Bam complex, which is composed of the outer membrane protein BamA, and four lipoproteins BamB, BamC, BamD and BamE.

It is found in the cell outer membrane. Functionally, part of the outer membrane protein assembly complex, which is involved in assembly and insertion of beta-barrel proteins into the outer membrane. This Salmonella typhimurium (strain LT2 / SGSC1412 / ATCC 700720) protein is Outer membrane protein assembly factor BamE.